Consider the following 177-residue polypeptide: Large ribosomal subunit protein uL6 (177 aa).

Belongs to the universal ribosomal protein uL6 family. Part of the 50S ribosomal subunit.

Functionally, this protein binds to the 23S rRNA, and is important in its secondary structure. It is located near the subunit interface in the base of the L7/L12 stalk, and near the tRNA binding site of the peptidyltransferase center. This chain is Large ribosomal subunit protein uL6, found in Janthinobacterium sp. (strain Marseille) (Minibacterium massiliensis).